The primary structure comprises 138 residues: Large ribosomal subunit protein uL16 (138 aa).

The protein belongs to the universal ribosomal protein uL16 family. Part of the 50S ribosomal subunit.

Its function is as follows. Binds 23S rRNA and is also seen to make contacts with the A and possibly P site tRNAs. The sequence is that of Large ribosomal subunit protein uL16 from Acidiphilium cryptum (strain JF-5).